The following is a 109-amino-acid chain: U4-lycotoxin-Ls1b (109 aa).

Residues M1–A22 form the signal peptide. Residues I23–R44 constitute a propeptide that is removed on maturation. The tract at residues A45–C88 is knottin domain. 4 disulfides stabilise this stretch: C48/C63, C55/C72, C62/C88, and C74/C86. The tract at residues Q89–V108 is linear cationic cytotoxin domain.

Belongs to the neurotoxin 19 (CSTX) family. 05 (U4-Lctx) subfamily. As to expression, expressed by the venom gland.

It is found in the secreted. Functionally, enhances the high-affinity desensitization of human P2RX3 purinoceptors. In Lycosa singoriensis (Wolf spider), this protein is U4-lycotoxin-Ls1b.